A 308-amino-acid chain; its full sequence is 4-hydroxy-3-methylbut-2-enyl diphosphate reductase (308 aa).

Cys12 is a [4Fe-4S] cluster binding site. Residues His41 and His74 each contribute to the (2E)-4-hydroxy-3-methylbut-2-enyl diphosphate site. 2 residues coordinate dimethylallyl diphosphate: His41 and His74. Positions 41 and 74 each coordinate isopentenyl diphosphate. A [4Fe-4S] cluster-binding site is contributed by Cys96. His124 contributes to the (2E)-4-hydroxy-3-methylbut-2-enyl diphosphate binding site. His124 serves as a coordination point for dimethylallyl diphosphate. His124 contacts isopentenyl diphosphate. Glu126 acts as the Proton donor in catalysis. Thr166 serves as a coordination point for (2E)-4-hydroxy-3-methylbut-2-enyl diphosphate. Residue Cys196 participates in [4Fe-4S] cluster binding. (2E)-4-hydroxy-3-methylbut-2-enyl diphosphate is bound by residues Ser224, Ser225, Asn226, and Ser268. Dimethylallyl diphosphate contacts are provided by Ser224, Ser225, Asn226, and Ser268. Residues Ser224, Ser225, Asn226, and Ser268 each coordinate isopentenyl diphosphate.

Belongs to the IspH family. The cofactor is [4Fe-4S] cluster.

It catalyses the reaction isopentenyl diphosphate + 2 oxidized [2Fe-2S]-[ferredoxin] + H2O = (2E)-4-hydroxy-3-methylbut-2-enyl diphosphate + 2 reduced [2Fe-2S]-[ferredoxin] + 2 H(+). The catalysed reaction is dimethylallyl diphosphate + 2 oxidized [2Fe-2S]-[ferredoxin] + H2O = (2E)-4-hydroxy-3-methylbut-2-enyl diphosphate + 2 reduced [2Fe-2S]-[ferredoxin] + 2 H(+). The protein operates within isoprenoid biosynthesis; dimethylallyl diphosphate biosynthesis; dimethylallyl diphosphate from (2E)-4-hydroxy-3-methylbutenyl diphosphate: step 1/1. It participates in isoprenoid biosynthesis; isopentenyl diphosphate biosynthesis via DXP pathway; isopentenyl diphosphate from 1-deoxy-D-xylulose 5-phosphate: step 6/6. Functionally, catalyzes the conversion of 1-hydroxy-2-methyl-2-(E)-butenyl 4-diphosphate (HMBPP) into a mixture of isopentenyl diphosphate (IPP) and dimethylallyl diphosphate (DMAPP). Acts in the terminal step of the DOXP/MEP pathway for isoprenoid precursor biosynthesis. The protein is 4-hydroxy-3-methylbut-2-enyl diphosphate reductase of Vesicomyosocius okutanii subsp. Calyptogena okutanii (strain HA).